A 325-amino-acid polypeptide reads, in one-letter code: uncharacterized protein (325 aa).

Residues 37–85 (EKPTYTPAKPVKKAPSVVQPRRVSRTLRSSESVHTNHGPERVFESPTPA) are disordered. Position 52 is a phosphoserine (S52). The segment covering 62–71 (TLRSSESVHT) has biased composition (polar residues). Residues 153 to 311 (EDEGKKCLIL…IDLIPFLEHL (159 aa)) enclose the FCP1 homology domain.

This is an uncharacterized protein from Schizosaccharomyces pombe (strain 972 / ATCC 24843) (Fission yeast).